The chain runs to 616 residues: Electron transfer flavoprotein-ubiquinone oxidoreductase, mitochondrial (616 aa).

A mitochondrion-targeting transit peptide spans 1–32 (MLVRLTKLSCPAYQWFHALKIKKCLPLCAPRC). 70-84 (VVIVGAGPAGLSAAI) is a binding site for FAD. N6-acetyllysine is present on K95. Residues 108-129 (IGAHTLSGACLDPAAFKELFPD) lie within the membrane without spanning it. Residues K131 and K222 each carry the N6-acetyllysine modification. A ubiquinone contacts are provided by G304 and G305. Residues K356 and K415 each carry the N6-acetyllysine modification. An intramembrane segment occupies 427 to 446 (AGLHVTEYEDNLKQSWVWKE). At S550 the chain carries Phosphoserine. Residues C560, C585, C588, and C591 each contribute to the [4Fe-4S] cluster site. The 30-residue stretch at 576–605 (FRLQINAQNCVHCKTCDIKDPSQNINWVVP) folds into the 4Fe-4S ferredoxin-type domain.

This sequence belongs to the ETF-QO/FixC family. As to quaternary structure, monomer. The cofactor is [4Fe-4S] cluster. It depends on FAD as a cofactor.

It localises to the mitochondrion inner membrane. The enzyme catalyses a ubiquinone + reduced [electron-transfer flavoprotein] = a ubiquinol + oxidized [electron-transfer flavoprotein] + H(+). Functionally, accepts electrons from ETF and reduces ubiquinone. The protein is Electron transfer flavoprotein-ubiquinone oxidoreductase, mitochondrial (Etfdh) of Rattus norvegicus (Rat).